The chain runs to 510 residues: NAD(P)H-quinone oxidoreductase subunit 2 B, chloroplastic (510 aa).

13 helical membrane-spanning segments follow: residues Leu-24–Leu-44, Ile-57–Phe-77, Ile-99–Ile-119, Met-124–Cys-144, Leu-149–Tyr-169, Tyr-183–Gly-203, Pro-227–Ala-247, Trp-295–Ile-315, Met-323–Asp-343, Tyr-354–Leu-374, Ala-395–Phe-415, Leu-418–Leu-438, and Met-484–Ile-504.

It belongs to the complex I subunit 2 family. In terms of assembly, NDH is composed of at least 16 different subunits, 5 of which are encoded in the nucleus.

It is found in the plastid. Its subcellular location is the chloroplast thylakoid membrane. The enzyme catalyses a plastoquinone + NADH + (n+1) H(+)(in) = a plastoquinol + NAD(+) + n H(+)(out). It catalyses the reaction a plastoquinone + NADPH + (n+1) H(+)(in) = a plastoquinol + NADP(+) + n H(+)(out). Its function is as follows. NDH shuttles electrons from NAD(P)H:plastoquinone, via FMN and iron-sulfur (Fe-S) centers, to quinones in the photosynthetic chain and possibly in a chloroplast respiratory chain. The immediate electron acceptor for the enzyme in this species is believed to be plastoquinone. Couples the redox reaction to proton translocation, and thus conserves the redox energy in a proton gradient. The protein is NAD(P)H-quinone oxidoreductase subunit 2 B, chloroplastic of Helianthus annuus (Common sunflower).